A 130-amino-acid chain; its full sequence is Glycine cleavage system H protein (130 aa).

The Lipoyl-binding domain occupies 24-106 (TVTIGITDHA…YDDGWFFKVK (83 aa)). Residue K65 is modified to N6-lipoyllysine.

It belongs to the GcvH family. As to quaternary structure, the glycine cleavage system is composed of four proteins: P, T, L and H. (R)-lipoate serves as cofactor.

Its function is as follows. The glycine cleavage system catalyzes the degradation of glycine. The H protein shuttles the methylamine group of glycine from the P protein to the T protein. This chain is Glycine cleavage system H protein, found in Saccharophagus degradans (strain 2-40 / ATCC 43961 / DSM 17024).